Reading from the N-terminus, the 215-residue chain is GTP-binding protein YPT6 (215 aa).

Residue 17 to 24 coordinates GTP; sequence GEQGVGKT. The Effector region motif lies at 39 to 47; that stretch reads YQATIGIDF. Residues 65–69 and 124–127 each bind GTP; these read DTAGQ and NKSD. Residues 178–196 are compositionally biased toward polar residues; sequence NSESTPLDSENANSANQNK. The tract at residues 178 to 215 is disordered; sequence NSESTPLDSENANSANQNKPGVIDISTAEEQEQSACQC. Residues Cys-213 and Cys-215 are each lipidated (S-geranylgeranyl cysteine). Position 215 is a cysteine methyl ester (Cys-215).

This sequence belongs to the small GTPase superfamily. Rab family. In terms of assembly, interacts with YIF1, YIP3 and YIP4.

The protein resides in the cell membrane. Its function is as follows. Protein transport. Might participate in post-Golgi transport. The polypeptide is GTP-binding protein YPT6 (YPT6) (Saccharomyces cerevisiae (strain ATCC 204508 / S288c) (Baker's yeast)).